The sequence spans 123 residues: Large ribosomal subunit protein bL12 (123 aa).

It belongs to the bacterial ribosomal protein bL12 family. Homodimer. Part of the ribosomal stalk of the 50S ribosomal subunit. Forms a multimeric L10(L12)X complex, where L10 forms an elongated spine to which 2 to 4 L12 dimers bind in a sequential fashion. Binds GTP-bound translation factors.

Functionally, forms part of the ribosomal stalk which helps the ribosome interact with GTP-bound translation factors. Is thus essential for accurate translation. This is Large ribosomal subunit protein bL12 from Shewanella amazonensis (strain ATCC BAA-1098 / SB2B).